We begin with the raw amino-acid sequence, 129 residues long: Large ribosomal subunit protein bL20 (129 aa).

The protein belongs to the bacterial ribosomal protein bL20 family.

In terms of biological role, binds directly to 23S ribosomal RNA and is necessary for the in vitro assembly process of the 50S ribosomal subunit. It is not involved in the protein synthesizing functions of that subunit. This chain is Large ribosomal subunit protein bL20, found in Mycobacterium leprae (strain Br4923).